Here is a 335-residue protein sequence, read N- to C-terminus: Pyruvate dehydrogenase E1 component subunit beta (335 aa).

Position 60 (E60) interacts with thiamine diphosphate. 3 residues coordinate K(+): A161, I162, and N166.

In terms of assembly, heterodimer of an alpha and a beta chain. Thiamine diphosphate serves as cofactor.

The protein resides in the plastid. It localises to the chloroplast. It catalyses the reaction N(6)-[(R)-lipoyl]-L-lysyl-[protein] + pyruvate + H(+) = N(6)-[(R)-S(8)-acetyldihydrolipoyl]-L-lysyl-[protein] + CO2. Its function is as follows. The pyruvate dehydrogenase complex catalyzes the overall conversion of pyruvate to acetyl-CoA and CO(2). It contains multiple copies of three enzymatic components: pyruvate dehydrogenase (E1), dihydrolipoamide acetyltransferase (E2) and lipoamide dehydrogenase (E3). The protein is Pyruvate dehydrogenase E1 component subunit beta (pdhB) of Chlorokybus atmophyticus (Soil alga).